We begin with the raw amino-acid sequence, 323 residues long: AA9 family lytic polysaccharide monooxygenase A (323 aa).

The N-terminal stretch at 1 to 19 (MKSFISLLGLSFLTCHASA) is a signal peptide. Cu(2+) contacts are provided by His-20 and His-90. Cysteines 59 and 175 form a disulfide. O2 contacts are provided by His-161 and Gln-170. Position 172 (Tyr-172) interacts with Cu(2+). N-linked (GlcNAc...) asparagine glycosylation occurs at Asn-215. Residues 287 to 323 (AVVQKFGQCGGQGWTGGTTCVAGSTCTATNAYYSQCL) form the CBM1 domain.

It belongs to the polysaccharide monooxygenase AA9 family. The cofactor is Cu(2+).

It localises to the secreted. It catalyses the reaction [(1-&gt;4)-beta-D-glucosyl]n+m + reduced acceptor + O2 = 4-dehydro-beta-D-glucosyl-[(1-&gt;4)-beta-D-glucosyl]n-1 + [(1-&gt;4)-beta-D-glucosyl]m + acceptor + H2O.. Functionally, lytic polysaccharide monooxygenase (LPMO) that depolymerizes crystalline and amorphous polysaccharides via the oxidation of scissile alpha- or beta-(1-4)-glycosidic bonds, yielding C1 and C4 oxidation products. Catalysis by LPMOs requires the reduction of the active-site copper from Cu(II) to Cu(I) by a reducing agent and H(2)O(2) or O(2) as a cosubstrate. In Botryotinia fuckeliana (strain B05.10) (Noble rot fungus), this protein is AA9 family lytic polysaccharide monooxygenase A.